Consider the following 908-residue polypeptide: NADH-quinone oxidoreductase subunit G (908 aa).

One can recognise a 2Fe-2S ferredoxin-type domain in the interval 2–83 (ATIHVDGKEY…GTFISIDDEE (82 aa)). 4 residues coordinate [2Fe-2S] cluster: Cys-34, Cys-45, Cys-48, and Cys-67. Residues 83–122 (EAKQFRESVVEWLMTNHPHDCPVCEEGGNCHLQDMTVMTG) enclose the 4Fe-4S His(Cys)3-ligated-type domain. [4Fe-4S] cluster contacts are provided by His-99, Cys-103, Cys-106, Cys-112, Cys-151, Cys-154, Cys-157, Cys-201, Cys-228, Cys-231, Cys-235, and Cys-263. One can recognise a 4Fe-4S Mo/W bis-MGD-type domain in the interval 221–277 (MQFAPSICQQCSIGCNISPGERYGELRRIENRYNGTVNHYFLCDRGRFGYGYVNLKD).

Belongs to the complex I 75 kDa subunit family. Composed of 13 different subunits. Subunits NuoCD, E, F, and G constitute the peripheral sector of the complex. Requires [2Fe-2S] cluster as cofactor. It depends on [4Fe-4S] cluster as a cofactor.

It catalyses the reaction a quinone + NADH + 5 H(+)(in) = a quinol + NAD(+) + 4 H(+)(out). NDH-1 shuttles electrons from NADH, via FMN and iron-sulfur (Fe-S) centers, to quinones in the respiratory chain. The immediate electron acceptor for the enzyme in this species is believed to be ubiquinone. Couples the redox reaction to proton translocation (for every two electrons transferred, four hydrogen ions are translocated across the cytoplasmic membrane), and thus conserves the redox energy in a proton gradient. The chain is NADH-quinone oxidoreductase subunit G (nuoG) from Escherichia coli O157:H7.